We begin with the raw amino-acid sequence, 205 residues long: Small ribosomal subunit protein uS4 (205 aa).

Positions 1–16 (MSKRETTKYKIDRRMG) are enriched in basic and acidic residues. Positions 1–46 (MSKRETTKYKIDRRMGENIWGRPKSPVNRRDYGPGQHGQRRKGKLS) are disordered. The S4 RNA-binding domain maps to 94 to 157 (SRLDAVVYRA…KQLVLVLESV (64 aa)).

The protein belongs to the universal ribosomal protein uS4 family. As to quaternary structure, part of the 30S ribosomal subunit. Contacts protein S5. The interaction surface between S4 and S5 is involved in control of translational fidelity.

Its function is as follows. One of the primary rRNA binding proteins, it binds directly to 16S rRNA where it nucleates assembly of the body of the 30S subunit. With S5 and S12 plays an important role in translational accuracy. The sequence is that of Small ribosomal subunit protein uS4 from Bartonella tribocorum (strain CIP 105476 / IBS 506).